A 269-amino-acid chain; its full sequence is G-protein coupled receptor homolog C3 (269 aa).

Cys-28 and Cys-107 are disulfide-bonded. A run of 5 helical transmembrane segments spans residues 30-50, 71-91, 123-143, 165-185, and 200-220; these read IMSV…TLMS, IGIL…SPVS, LMQI…FVYC, IVLM…IVLM, and HLCL…ISLA.

Belongs to the G-protein coupled receptor 1 family.

The protein localises to the host cell membrane. This Sus scrofa (Pig) protein is G-protein coupled receptor homolog C3.